We begin with the raw amino-acid sequence, 175 residues long: Probable RNA-binding protein EIF1AD (175 aa).

The S1-like domain maps to 5–89; sequence TKKRYITNKV…VKGEIEYILD (85 aa). Residues 116–128 are compositionally biased toward basic and acidic residues; the sequence is EAKRGQTSDKMID. The tract at residues 116 to 175 is disordered; that stretch reads EAKRGQTSDKMIDDDMLPPSESEEEDESEGEETYDEDDVDDEEEEEFDTYNPNRMQAPSK. Acidic residues predominate over residues 129–163; sequence DDMLPPSESEEEDESEGEETYDEDDVDDEEEEEFD. A compositionally biased stretch (polar residues) spans 165 to 175; sequence YNPNRMQAPSK.

Belongs to the EIF1AD family.

This is Probable RNA-binding protein EIF1AD from Caenorhabditis elegans.